A 360-amino-acid polypeptide reads, in one-letter code: Glutaminyl-peptide cyclotransferase (360 aa).

The signal sequence occupies residues 1 to 23; that stretch reads MKYLKILIIVTIFFFLLINVINC. N-linked (GlcNAc...) asparagine glycosylation occurs at Asn135. Asp165 contacts Zn(2+). The active-site Proton acceptor is Glu199. Glu200 is a binding site for Zn(2+). Asp251 functions as the Proton acceptor in the catalytic mechanism. His330 serves as a coordination point for Zn(2+).

The protein belongs to the glutaminyl-peptide cyclotransferase family.

The protein resides in the secreted. The enzyme catalyses N-terminal L-glutaminyl-[peptide] = N-terminal 5-oxo-L-prolyl-[peptide] + NH4(+). Responsible for the biosynthesis of pyroglutamyl peptides. Has a bias against acidic and tryptophan residues adjacent to the N-terminal glutaminyl residue and a lack of importance of chain length after the second residue. Also catalyzes N-terminal pyroglutamate formation. This Dictyostelium discoideum (Social amoeba) protein is Glutaminyl-peptide cyclotransferase (qpct).